Reading from the N-terminus, the 372-residue chain is PqqA peptide cyclase (372 aa).

The region spanning 4 to 220 (APPPLSVLLE…ETARRQLGDR (217 aa)) is the Radical SAM core domain. Residues Cys-18, Cys-22, and Cys-25 each contribute to the [4Fe-4S] cluster site.

Belongs to the radical SAM superfamily. PqqE family. As to quaternary structure, interacts with PqqD. The interaction is necessary for activity of PqqE. Requires [4Fe-4S] cluster as cofactor.

It carries out the reaction [PQQ precursor protein] + S-adenosyl-L-methionine = E-Y cross-linked-[PQQ precursor protein] + 5'-deoxyadenosine + L-methionine + H(+). The protein operates within cofactor biosynthesis; pyrroloquinoline quinone biosynthesis. In terms of biological role, catalyzes the cross-linking of a glutamate residue and a tyrosine residue in the PqqA protein as part of the biosynthesis of pyrroloquinoline quinone (PQQ). This is PqqA peptide cyclase from Xanthomonas axonopodis pv. citri (strain 306).